We begin with the raw amino-acid sequence, 477 residues long: MQKHGTNEGALWGGRFSGGPSEAMFALSVSTHFDWVLAPYDVLASKAHARVLNKAKLLSDSDLETMLGGLDKLGKAVASGEFKPLPTDEDVHGAMERGLIDIVGPEVGGRLRAGRSRNDQVATLFRMWVRDAVRSVALQVTELVDALAYQATQHPRAIMPGKTHSQAAQPVLLAHQLLAHAQPLLRDIDRIRDLDKRLAISPYGSGALAGSSLHLDPEAIAQELGFDSACDNSIDGTSSRDFAAETAYVLAQIAIDMSRLAEEIIYWCTPEYGYVTLSDAWSTGSSIMPQKKNPDVAELTRGKTGRLIGNLSGLLATLKAQPLAYNRDLQEDKEPIVDSFAQLNLLLPAMTGLVSTLTFHEDRLLSLAPAGFTLATDLAEWMVRQGVPFREAHEASGACVRIAESRGVGLDELTDDELASVDVRLTPEVRTVLTVEGAVASRATRGGTAGVRVEEQRSRVESTSQSFKEWALTPVRK.

This sequence belongs to the lyase 1 family. Argininosuccinate lyase subfamily.

The protein localises to the cytoplasm. It carries out the reaction 2-(N(omega)-L-arginino)succinate = fumarate + L-arginine. It participates in amino-acid biosynthesis; L-arginine biosynthesis; L-arginine from L-ornithine and carbamoyl phosphate: step 3/3. The polypeptide is Argininosuccinate lyase (Corynebacterium diphtheriae (strain ATCC 700971 / NCTC 13129 / Biotype gravis)).